Reading from the N-terminus, the 564-residue chain is Potassium-transporting ATPase potassium-binding subunit (564 aa).

A run of 10 helical transmembrane segments spans residues 4 to 24 (HEIL…PFLG), 67 to 87 (TLAL…ILML), 135 to 155 (VGLT…LVAL), 179 to 199 (LYVL…QGVP), 258 to 278 (FEVA…GHYV), 286 to 306 (AILG…LWAE), 376 to 396 (IFGG…IAVF), 420 to 440 (LLVF…AIAA), 487 to 507 (LMIG…ILAI), and 528 to 548 (GPLF…LTFL).

It belongs to the KdpA family. In terms of assembly, the system is composed of three essential subunits: KdpA, KdpB and KdpC.

The protein localises to the cell inner membrane. Its function is as follows. Part of the high-affinity ATP-driven potassium transport (or Kdp) system, which catalyzes the hydrolysis of ATP coupled with the electrogenic transport of potassium into the cytoplasm. This subunit binds the periplasmic potassium ions and delivers the ions to the membrane domain of KdpB through an intramembrane tunnel. The sequence is that of Potassium-transporting ATPase potassium-binding subunit from Pseudomonas aeruginosa (strain ATCC 15692 / DSM 22644 / CIP 104116 / JCM 14847 / LMG 12228 / 1C / PRS 101 / PAO1).